Reading from the N-terminus, the 396-residue chain is NADH-quinone oxidoreductase subunit D (396 aa).

The protein belongs to the complex I 49 kDa subunit family. In terms of assembly, NDH-1 is composed of 14 different subunits. Subunits NuoB, C, D, E, F, and G constitute the peripheral sector of the complex.

It is found in the cell inner membrane. The enzyme catalyses a quinone + NADH + 5 H(+)(in) = a quinol + NAD(+) + 4 H(+)(out). In terms of biological role, NDH-1 shuttles electrons from NADH, via FMN and iron-sulfur (Fe-S) centers, to quinones in the respiratory chain. The immediate electron acceptor for the enzyme in this species is believed to be ubiquinone. Couples the redox reaction to proton translocation (for every two electrons transferred, four hydrogen ions are translocated across the cytoplasmic membrane), and thus conserves the redox energy in a proton gradient. The chain is NADH-quinone oxidoreductase subunit D from Brucella melitensis biotype 1 (strain ATCC 23456 / CCUG 17765 / NCTC 10094 / 16M).